Consider the following 257-residue polypeptide: Lipid A 4'-phosphatase (257 aa).

The next 6 helical transmembrane spans lie at 21–41, 85–105, 119–139, 174–194, 201–221, and 225–245; these read FGAFLLLFWTWWALLAVFRAF, IFFRLPYVVAIVMAWKLIECY, KLKVGLGALLIGPVLLVNVIL, CSFVSGEAASAGWLFCLLLFV, ALVPPVAAISILTPAMRLSFG, and LSDVTLGWLSSLVVFAALLAL.

This sequence belongs to the lipid A LpxF 4'-phosphatase family.

The protein localises to the cell inner membrane. Its pathway is bacterial outer membrane biogenesis; LPS lipid A biosynthesis. Its function is as follows. Probably removes the 4'-phosphate moiety from lipid A species. Not seen to act on other membrane components, nor does it dephosphorylate the 1-phosphate group of lipid A and/or lipid A precursors. In Rhizobium etli (strain ATCC 51251 / DSM 11541 / JCM 21823 / NBRC 15573 / CFN 42), this protein is Lipid A 4'-phosphatase.